Consider the following 282-residue polypeptide: Pantothenate synthetase (282 aa).

30-37 (MGYLHEGH) contributes to the ATP binding site. H37 (proton donor) is an active-site residue. A (R)-pantoate-binding site is contributed by Q61. Residue Q61 coordinates beta-alanine. 147–150 (GQKD) is a binding site for ATP. Position 153 (Q153) interacts with (R)-pantoate. Residues V176 and 184–187 (LSSR) contribute to the ATP site.

This sequence belongs to the pantothenate synthetase family. As to quaternary structure, homodimer.

Its subcellular location is the cytoplasm. It carries out the reaction (R)-pantoate + beta-alanine + ATP = (R)-pantothenate + AMP + diphosphate + H(+). It participates in cofactor biosynthesis; (R)-pantothenate biosynthesis; (R)-pantothenate from (R)-pantoate and beta-alanine: step 1/1. Its function is as follows. Catalyzes the condensation of pantoate with beta-alanine in an ATP-dependent reaction via a pantoyl-adenylate intermediate. The sequence is that of Pantothenate synthetase from Desulfitobacterium hafniense (strain DSM 10664 / DCB-2).